The chain runs to 386 residues: S-adenosylmethionine synthase (386 aa).

ATP is bound at residue H14. D16 contributes to the Mg(2+) binding site. Residue E42 participates in K(+) binding. Positions 55 and 101 each coordinate L-methionine. Residues 101–111 form a flexible loop region; the sequence is QSADIALGVDE. Residues 166-168, 233-234, D242, 248-249, A265, and K269 each bind ATP; these read DGK, RF, and RK. Residue D242 coordinates L-methionine. K273 is an L-methionine binding site.

Belongs to the AdoMet synthase family. In terms of assembly, homotetramer; dimer of dimers. It depends on Mg(2+) as a cofactor. Requires K(+) as cofactor.

Its subcellular location is the cytoplasm. The enzyme catalyses L-methionine + ATP + H2O = S-adenosyl-L-methionine + phosphate + diphosphate. It functions in the pathway amino-acid biosynthesis; S-adenosyl-L-methionine biosynthesis; S-adenosyl-L-methionine from L-methionine: step 1/1. Catalyzes the formation of S-adenosylmethionine (AdoMet) from methionine and ATP. The overall synthetic reaction is composed of two sequential steps, AdoMet formation and the subsequent tripolyphosphate hydrolysis which occurs prior to release of AdoMet from the enzyme. This is S-adenosylmethionine synthase from Acholeplasma laidlawii (strain PG-8A).